We begin with the raw amino-acid sequence, 233 residues long: Probable RNA 2'-phosphotransferase (233 aa).

It belongs to the KptA/TPT1 family.

Removes the 2'-phosphate from RNA via an intermediate in which the phosphate is ADP-ribosylated by NAD followed by a presumed transesterification to release the RNA and generate ADP-ribose 1''-2''-cyclic phosphate (APPR&gt;P). May function as an ADP-ribosylase. This is Probable RNA 2'-phosphotransferase from Hyperthermus butylicus (strain DSM 5456 / JCM 9403 / PLM1-5).